Consider the following 250-residue polypeptide: Probable xyloglucan-specific endo-beta-1,4-glucanase A (250 aa).

The N-terminal stretch at 1 to 19 is a signal peptide; that stretch reads MKLSVLSLASLASAAALNA. N-linked (GlcNAc...) asparagine glycosylation is present at Asn-72.

It belongs to the glycosyl hydrolase 12 (cellulase H) family.

The protein localises to the secreted. The catalysed reaction is xyloglucan + H2O = xyloglucan oligosaccharides.. In terms of biological role, catalyzes endohydrolysis of 1,4-beta-D-glucosidic linkages in xyloglucan with retention of the beta-configuration of the glycosyl residues. Specific for xyloglucan and does not hydrolyze other cell wall components. The polypeptide is Probable xyloglucan-specific endo-beta-1,4-glucanase A (xgeA) (Aspergillus terreus (strain NIH 2624 / FGSC A1156)).